Reading from the N-terminus, the 330-residue chain is MRIRYGWELALAALLVIEIVAFGAINPRMLDLNMLLFSTSDFICIGIVALPLTMVIVSGGIDISFGSTIGLCAIALGVLFQSGVPMPLAILLTLLLGALCGLINAGLIIYTKVNPLVITLGTLYLFAGSALLLSGMAGATGYEGIGGFPMAFTDFANLDVLGLPVPLIIFLICLLVFWLWLHKTHAGRNVFLIGQSPRVAVYSAIPVNRTLCALYAMTGLASAVAAVLLVSYFGSARSDLGASFLMPAITAVVLGGANIYGGSGSIIGTAIAVLLVGYLQQGLQMAGVPNQVSSALSGALLIVVVVGRSVSLHRQQIKEWLARRANNPLP.

At 1 to 4 the chain is on the cytoplasmic side; the sequence is MRIR. A helical membrane pass occupies residues 5–25; sequence YGWELALAALLVIEIVAFGAI. Topologically, residues 26–42 are periplasmic; the sequence is NPRMLDLNMLLFSTSDF. The helical transmembrane segment at 43-63 threads the bilayer; sequence ICIGIVALPLTMVIVSGGIDI. The Cytoplasmic portion of the chain corresponds to 64-67; the sequence is SFGS. A run of 2 helical transmembrane segments spans residues 68–88 and 89–109; these read TIGLCAIALGVLFQSGVPMPL and AILLTLLLGALCGLINAGLII. Residues 110–115 lie on the Cytoplasmic side of the membrane; sequence YTKVNP. Residues 116 to 136 traverse the membrane as a helical segment; sequence LVITLGTLYLFAGSALLLSGM. Residues 137–159 are Periplasmic-facing; sequence AGATGYEGIGGFPMAFTDFANLD. A helical membrane pass occupies residues 160 to 180; the sequence is VLGLPVPLIIFLICLLVFWLW. Residues 181–209 are Cytoplasmic-facing; it reads LHKTHAGRNVFLIGQSPRVAVYSAIPVNR. A helical membrane pass occupies residues 210–230; that stretch reads TLCALYAMTGLASAVAAVLLV. At 231–237 the chain is on the periplasmic side; the sequence is SYFGSAR. 2 consecutive transmembrane segments (helical) span residues 238–258 and 259–279; these read SDLGASFLMPAITAVVLGGAN and IYGGSGSIIGTAIAVLLVGYL. Residues 280–285 lie on the Periplasmic side of the membrane; that stretch reads QQGLQM. A helical transmembrane segment spans residues 286 to 306; that stretch reads AGVPNQVSSALSGALLIVVVV. Residues 307-330 are Cytoplasmic-facing; it reads GRSVSLHRQQIKEWLARRANNPLP.

This sequence belongs to the binding-protein-dependent transport system permease family. AraH/RbsC subfamily. The complex is composed of two ATP-binding proteins (LsrA), two transmembrane proteins (LsrC and LsrD) and a solute-binding protein (LsrB).

The protein localises to the cell inner membrane. Part of the ABC transporter complex LsrABCD involved in autoinducer 2 (AI-2) import. Probably responsible for the translocation of the substrate across the membrane. In Escherichia coli (strain SMS-3-5 / SECEC), this protein is Autoinducer 2 import system permease protein LsrD (lsrD).